The primary structure comprises 316 residues: Cuticle collagen 12 (316 aa).

Residues 1 to 36 (MTEDPKQIAQETESLRKVAFFGIAVSTIATLTAIIA) form the signal peptide. 2 stretches are compositionally biased toward low complexity: residues 127-157 (SGAA…PGQD) and 183-204 (APGQ…GAAL). The interval 127-316 (SGAAGPAGSP…CPPPRTAPGY (190 aa)) is disordered. Triple-helical region stretches follow at residues 128-157 (GAAG…PGQD), 176-202 (GPPG…SGGA), 206-235 (GPPG…PGQV), 240-266 (GTPG…AGSS), and 269-304 (GGPG…EGAC). Residues 205–217 (PGPPGPAGPPGPA) show a composition bias toward pro residues. The segment covering 219–234 (QPGSNGNAGAPGAPGQ) has biased composition (low complexity). The span at 241–251 (TPGPAGPPGSP) shows a compositional bias: pro residues. Low complexity-rich tracts occupy residues 256–266 (APGQPGQAGSS) and 276–295 (DAGA…PGQD). The segment covering 307–316 (CPPPRTAPGY) has biased composition (pro residues).

The protein belongs to the cuticular collagen family. In terms of assembly, collagen polypeptide chains are complexed within the cuticle by disulfide bonds and other types of covalent cross-links.

In terms of biological role, nematode cuticles are composed largely of collagen-like proteins. The cuticle functions both as an exoskeleton and as a barrier to protect the worm from its environment. The chain is Cuticle collagen 12 (col-12) from Caenorhabditis elegans.